The primary structure comprises 456 residues: MDGDLAIGKMASSTSPMGPIDSLELLDLLFDRQDGVLRHVELGEDWGHGEDQVLPGADSDDFLNSILGSGDSDSPTWSPAASDSGISEDLPSDTQDTPPHGGVPATPAGCHSVESGKGPCPSYHPGPTCPARHLGPVAPRLETSVAIDLEMWSPGVYAEEQTDLADSPSRYNLTVKDLLLSSSSGDLQQHHLAAPHLLRPGTGHCQELVLTEDEKKLLAKEGITLPTQLPLTKYEERMLKKIRRKIRNKQSAQESRKKKKEYIDGLETRMSACTAQNQELQRKVLHLEKQNLSLLEQLKKLQAIVVQSTSKSAQTGTCIAVLLFSFALIVLPSISPFASNRAESPGDFAPVRVFSRTLHNDAASRVAPDTAPGSEAPGPGPNTGALQERSPGSPPGEWESQDTRALDNSTEDLDNSTLVQGNSVKELDQATLLDCAPPEPAVSPGHVGLEAAGGEL.

Disordered regions lie at residues 1-20 (MDGDLAIGKMASSTSPMGPI) and 47-120 (GHGE…KGPC). Residues 1–317 (MDGDLAIGKM…STSKSAQTGT (317 aa)) are Cytoplasmic-facing. A compositionally biased stretch (polar residues) spans 71-85 (DSDSPTWSPAASDSG). In terms of domain architecture, bZIP spans 238–301 (MLKKIRRKIR…LSLLEQLKKL (64 aa)). Positions 240 to 269 (KKIRRKIRNKQSAQESRKKKKEYIDGLETR) are basic motif. The interval 280-301 (LQRKVLHLEKQNLSLLEQLKKL) is leucine-zipper. A Glycyl lysine isopeptide (Lys-Gly) (interchain with G-Cter in ubiquitin) cross-link involves residue K289. Residues 318–338 (CIAVLLFSFALIVLPSISPFA) form a helical; Signal-anchor for type II membrane protein membrane-spanning segment. Residues 339 to 456 (SNRAESPGDF…VGLEAAGGEL (118 aa)) are Lumenal-facing. Disordered regions lie at residues 365 to 423 (RVAP…QGNS) and 435 to 456 (CAPPEPAVSPGHVGLEAAGGEL). Residues N408 and N415 are each glycosylated (N-linked (GlcNAc...) asparagine).

The protein belongs to the bZIP family. ATF subfamily. As to quaternary structure, binds DNA as a dimer. May form homodimers. Interacts with ATF6. Interacts with SYNV1/HRD1; this interaction leads to CREB3L3 ubiquitination and proteasomal degradation. Controlled by regulated intramembrane proteolysis (RIP). Following ER stress a fragment containing the cytoplasmic transcription factor domain is released by proteolysis. The cleavage seems to be performed sequentially by site-1 and site-2 proteases (PS1 and PS2). In terms of processing, N-glycosylation is required for optimal proteolytic activation. Post-translationally, ubiquitinated at Lys-289 by SYNV1/HRD1 via 'Lys-27'-linked ubiquitin.

It is found in the endoplasmic reticulum membrane. Its subcellular location is the nucleus. In terms of biological role, transcription factor that may act during endoplasmic reticulum stress by activating unfolded protein response target genes. Activated in response to cAMP stimulation. In vitro, binds the cAMP response element (CRE). Activates transcription through box-B element and CRE. Seems to function synergistically with ATF6. In acute inflammatory response, may activate expression of acute phase response (APR) genes. May be involved in growth suppression. Regulates FGF21 transcription. Plays a crucial role in the regulation of triglyceride metabolism and is required for the maintenance of normal plasma triglyceride concentrations. The protein is Cyclic AMP-responsive element-binding protein 3-like protein 3 (CREB3L3) of Bos taurus (Bovine).